The primary structure comprises 509 residues: Probable cytochrome P450 519B1 (509 aa).

Residues 1–21 traverse the membrane as a helical segment; the sequence is MNLINLILYFILFWIVFDFIR. Cysteine 456 provides a ligand contact to heme.

It belongs to the cytochrome P450 family. Heme is required as a cofactor.

Its subcellular location is the membrane. The sequence is that of Probable cytochrome P450 519B1 (cyp519B1) from Dictyostelium discoideum (Social amoeba).